Reading from the N-terminus, the 202-residue chain is LexA repressor (202 aa).

The H-T-H motif DNA-binding region spans 28–48 (RAEIAQRLGFRSPNAAEEHLK). Active-site for autocatalytic cleavage activity residues include Ser119 and Lys156.

Belongs to the peptidase S24 family. As to quaternary structure, homodimer.

The catalysed reaction is Hydrolysis of Ala-|-Gly bond in repressor LexA.. Functionally, represses a number of genes involved in the response to DNA damage (SOS response), including recA and lexA. Binds to the 16 bp palindromic sequence 5'-CTGTATATATATACAG-3'. In the presence of single-stranded DNA, RecA interacts with LexA causing an autocatalytic cleavage which disrupts the DNA-binding part of LexA, leading to derepression of the SOS regulon and eventually DNA repair. This is LexA repressor from Cronobacter sakazakii (strain ATCC BAA-894) (Enterobacter sakazakii).